Here is a 173-residue protein sequence, read N- to C-terminus: Secreted RxLR effector protein RXLR-C12 (173 aa).

The first 18 residues, 1–18 (MLQFATAFLAISANVVMT), serve as a signal peptide directing secretion. The RxLR-dEER motif lies at 41-55 (RRLRTHEIGTVPEER). An N-linked (GlcNAc...) asparagine glycan is attached at N155.

The protein belongs to the RxLR effector family.

Its subcellular location is the secreted. The protein localises to the host cytoplasm. The protein resides in the host nucleus. In terms of biological role, secreted effector that suppresses pattern-triggered immunity (PTI) in plant host. This Plasmopara halstedii (Downy mildew of sunflower) protein is Secreted RxLR effector protein RXLR-C12.